Reading from the N-terminus, the 781-residue chain is MTAPEKPVKQEEMAALDVDSGGGGGGGGGHGEYLQQQQQHGNGAVAAAAAAQDTQPSPLALLAATCSKIGPPSPGDDEEEAAAAAGAPAAAGATGDLASAQLGGAPNRWEVLSATPTTIKDEAGNLVQIPSAATSSGQYVLPLQNLQNQQIFSVAPGSDSSNGTVSSVQYQVIPQIQSADGQQVQIGFTGSSDNGGINQESSQIQIIPGSNQTLLASGTPSANIQNLIPQTGQVQVQGVAIGGSSFPGQTQVVANVPLGLPGNITFVPINSVDLDSLGLSGSSQTMTAGINADGHLINTGQAMDSSDNSERTGERVSPDINETNTDTDLFVPTSSSSQLPVTIDSTGILQQNTNSLTTSSGQVHSSDLQGNYIQSPVSEETQAQNIQVSTAQPVVQHLQLQESQQPTSQAQIVQGITPQTIHGVQASGQNISQQALQNLQLQLNPGTFLIQAQTVTPSGQVTWQTFQVQGVQNLQNLQIQNTAAQQITLTPVQTLTLGQVAAGGAFTSTPVSLSTGQLPNLQTVTVNSIDSAGIQLHPGENADSPADIRIKEEEPDPEEWQLSGDSTLNTNDLTHLRVQVVDEEGDQQHQEGKRLRRVACTCPNCKEGGGRGTNLGKKKQHICHIPGCGKVYGKTSHLRAHLRWHSGERPFVCNWMYCGKRFTRSDELQRHRRTHTGEKKFVCPECSKRFMRSDHLAKHIKTHQNKKGIHSSSTVLASVEAARDDTLITAGGTTLILANIQQGSVSGIGTVNTSATSNQDILTNTEIPLQLVTVSGNETME.

The span at 1–12 shows a compositional bias: basic and acidic residues; the sequence is MTAPEKPVKQEE. Disordered stretches follow at residues 1–53 and 65–88; these read MTAP…AAQD and TCSK…AGAP. A compositionally biased stretch (gly residues) spans 20–31; the sequence is SGGGGGGGGGHG. Over residues 32–53 the composition is skewed to low complexity; it reads EYLQQQQQHGNGAVAAAAAAQD. Ser73 bears the Phosphoserine mark. A Glycyl lysine isopeptide (Lys-Gly) (interchain with G-Cter in SUMO) cross-link involves residue Lys120. Residues 138-237 form a transactivation domain (Gln-rich) region; that stretch reads QYVLPLQNLQ…IPQTGQVQVQ (100 aa). The tract at residues 301–338 is disordered; that stretch reads QAMDSSDNSERTGERVSPDINETNTDTDLFVPTSSSSQ. A compositionally biased stretch (basic and acidic residues) spans 308–317; sequence NSERTGERVS. Polar residues predominate over residues 320–338; it reads INETNTDTDLFVPTSSSSQ. Residues 350–499 form a transactivation domain (Gln-rich) region; the sequence is QQNTNSLTTS…TPVQTLTLGQ (150 aa). Positions 461–469 match the 9aaTAD motif; that stretch reads VTWQTFQVQ. The repressor domain stretch occupies residues 534–620; sequence IQLHPGENAD…RGTNLGKKKQ (87 aa). The residue at position 551 (Lys551) is an N6-acetyllysine; alternate. Lys551 is covalently cross-linked (Glycyl lysine isopeptide (Lys-Gly) (interchain with G-Cter in SUMO); alternate). Lys551 participates in a covalent cross-link: Glycyl lysine isopeptide (Lys-Gly) (interchain with G-Cter in SUMO1); alternate. Lys551 participates in a covalent cross-link: Glycyl lysine isopeptide (Lys-Gly) (interchain with G-Cter in SUMO2); alternate. Phosphoserine is present on residues Ser563 and Ser566. Lys593 participates in a covalent cross-link: Glycyl lysine isopeptide (Lys-Gly) (interchain with G-Cter in SUMO2). The C2H2-type 1 zinc finger occupies 621 to 645; it reads HICHIPGCGKVYGKTSHLRAHLRWH. A Phosphoserine modification is found at Ser646. C2H2-type zinc fingers lie at residues 651-675 and 681-703; these read FVCN…RRTH and FVCP…IKTH.

Belongs to the Sp1 C2H2-type zinc-finger protein family. Interacts with HLTF; the interaction may be required for basal transcriptional activity of HLTF. Interacts with HDAC1; the interaction deacetylates SP3 and regulates its transcriptional activity. Interacts with HDAC2 (preferably the CK2-phosphorylated form); the interaction deacetylates SP3 and regulates its transcriptional activity. Interacts with MEIS2 isoform 4 and PBX1 isoform PBX1a. Post-translationally, not glycosylated. In terms of processing, acetylated by histone acetyltransferase p300, deacetylated by HDACs. Acetylation/deacetylation states regulate transcriptional activity. Acetylation appears to activate transcription. Alternate sumoylation and acetylation at Lys-551 also control transcriptional activity. Ceramides can also regulate acetylation/deacetylation events through altering the interaction of HDAC with SP3. In vitro, C(18)-ceramides, but not C(16)-ceramides, increase the interaction of HDAC1 with SP3 and enhance the deacetylation of SP3 and the subsequent repression of the TERT promoter. Sumoylated on all isoforms. Sumoylated on 2 sites in longer isoforms with Lys-551 being the major site. Sumoylation at this site promotes nuclear localization to the nuclear periphery, nuclear dots and PML nuclear bodies. Sumoylation on Lys-551 represses the transactivation activity, except for the largest isoform, L-Sp3, which has little effect on transactivation. Alternate sumoylation and acetylation at Lys-551 also control transcriptional activity. In terms of tissue distribution, ubiquitously expressed.

Its subcellular location is the nucleus. It localises to the PML body. In terms of biological role, transcriptional factor that can act as an activator or repressor depending on isoform and/or post-translational modifications. Binds to GT and GC boxes promoter elements. Competes with SP1 for the GC-box promoters. Weak activator of transcription but can activate a number of genes involved in different processes such as cell-cycle regulation, hormone-induction and house-keeping. The chain is Transcription factor Sp3 (SP3) from Homo sapiens (Human).